A 317-amino-acid chain; its full sequence is DNA repair nuclease/redox regulator APEX1 (317 aa).

Residues 1–32 (MPKRGKRAAAEDGEEPKSEPETKKSKGAAKKT) form a necessary for interaction with YBX1, binding to RNA, association together with NPM1 to rRNA, endoribonuclease activity on abasic RNA and localization in the nucleoli region. Residues 1–57 (MPKRGKRAAAEDGEEPKSEPETKKSKGAAKKTEKEAAGEGPVLYEDPPDQKTSASGK) are disordered. Lysine 6 bears the N6-acetyllysine; by EP300 mark. A Nuclear localization signal (NLS) motif is present at residues 8 to 12 (AAAED). The span at 15–37 (EPKSEPETKKSKGAAKKTEKEAA) shows a compositional bias: basic and acidic residues. A Phosphoserine modification is found at serine 18. Residues 22–32 (TKKSKGAAKKT) are necessary for interaction with NPM1 and for efficient rRNA binding. Lysine 26, lysine 30, lysine 31, and lysine 34 each carry N6-acetyllysine. Serine 53 carries the post-translational modification Phosphoserine. A Nuclear export signal (NES) motif is present at residues 63–79 (ICSWNVDGLRAWIKKKG). An S-nitrosocysteine; alternate modification is found at cysteine 64. Cysteine 64 and cysteine 92 are joined by a disulfide. Aspartate 69 provides a ligand contact to Mg(2+). At cysteine 92 the chain carries S-nitrosocysteine; alternate. Glutamate 95 is a Mg(2+) binding site. Tyrosine 170 is an active-site residue. Lysine 196 is modified (N6-acetyllysine). Mg(2+)-binding residues include aspartate 209 and asparagine 211. Aspartate 209 functions as the Proton donor/acceptor in the catalytic mechanism. Residue threonine 232 is modified to Phosphothreonine; by CDK5. The tract at residues 288-317 (HSLLPALCDSKIRSKALGSDHCPITLYLAL) is mitochondrial targeting sequence (MTS). Residue aspartate 307 coordinates Mg(2+). Cysteine 309 bears the S-nitrosocysteine mark.

It belongs to the DNA repair enzymes AP/ExoA family. Monomer. Homodimer; disulfide-linked. Component of the SET complex, composed of at least APEX1, SET, ANP32A, HMGB2, NME1 and TREX1. Associates with the dimer XRCC5/XRCC6 in a DNA-dependent manner. Interacts with SIRT1; the interaction is increased in the context of genotoxic stress. Interacts with HDAC1, HDAC2 and HDAC3; the interactions are not dependent on the APEX1 acetylation status. Interacts with XRCC1; the interaction is induced by SIRT1 and increased with the APEX1 acetylated form. Interacts with NPM1 (via N-terminal domain); the interaction is RNA-dependent and decreases in hydrogen peroxide-damaged cells. Interacts (via N-terminus) with YBX1 (via C-terminus); the interaction is increased in presence of APEX1 acetylated. Interacts with HNRNPL; the interaction is DNA-dependent. Interacts (via N-terminus) with KPNA1 and KPNA2. Interacts with TXN; the interaction stimulates the FOS/JUN AP-1 complex DNA-binding activity in a redox-dependent manner. Interacts with GZMA, KRT8, MDM2, POLB, PRDX6, PRPF19, RPLP0, TOMM20 and WDR77. Binds to CDK5. Requires Mg(2+) as cofactor. It depends on Mn(2+) as a cofactor. Post-translationally, phosphorylated. Phosphorylation by kinase PKC or casein kinase CK2 results in enhanced redox activity that stimulates binding of the FOS/JUN AP-1 complex to its cognate binding site. AP-endodeoxyribonuclease activity is not affected by CK2-mediated phosphorylation. Phosphorylation of Thr-232 by CDK5 in response to MPP(+)/MPTP (1-methyl-4-phenylpyridinium) reduces AP-endodeoxyribonuclease activity resulting in accumulation of DNA damage and contributing to neuronal death. Acetylated on Lys-6. Acetylation is increased by the transcriptional coactivator EP300 acetyltransferase, genotoxic agents like H(2)O(2) and methyl methanesulfonate (MMS). Acetylation increases its binding affinity to the negative calcium response element (nCaRE) DNA promoter. The acetylated form induces a stronger binding of YBX1 to the Y-box sequence in the MDR1 promoter than the unacetylated form. Deacetylated on lysines. Lys-6 is deacetylated by SIRT1. In terms of processing, cleaved at Lys-30 by granzyme A to create the mitochondrial form; leading in reduction of binding to DNA, AP endodeoxyribonuclease activity, redox activation of transcription factors and to enhanced cell death. Cleaved by granzyme K; leading to intracellular ROS accumulation and enhanced cell death after oxidative stress. Post-translationally, cys-64 and Cys-92 are nitrosylated in response to nitric oxide (NO) and lead to the exposure of the nuclear export signal (NES). Ubiquitinated by MDM2; leading to translocation to the cytoplasm and proteasomal degradation.

It is found in the nucleus. Its subcellular location is the nucleolus. The protein resides in the nucleus speckle. It localises to the endoplasmic reticulum. The protein localises to the cytoplasm. It is found in the mitochondrion. The enzyme catalyses a deoxyribonucleotide-2'-deoxyribose-5'-monophosphate-DNA + H2O = a 5'-end 2'-deoxyribose-5'-monophosphate-DNA + a 3'-end 2'-deoxyribonucleotide-DNA + H(+). It carries out the reaction Exonucleolytic cleavage in the 3'- to 5'-direction to yield nucleoside 5'-phosphates.. It catalyses the reaction a 3'-end 2'-deoxyribonucleotide-3'-phosphoglycolate-DNA + H2O = 2-phosphoglycolate + a 3'-end 2'-deoxyribonucleotide-DNA + H(+). The catalysed reaction is a 3'-end 2'-deoxyribonucleotide-8-oxoguanine-DNA + H2O = 8-oxo-dGMP + a 3'-end 2'-deoxyribonucleotide-DNA + H(+). NPM1 stimulates endodeoxyribonuclease activity on double-stranded DNA with AP sites, but inhibits endoribonuclease activity on single-stranded RNA containing AP sites. Multifunctional protein that plays a central role in the cellular response to oxidative stress. The two major activities of APEX1 are DNA repair and redox regulation of transcriptional factors. Functions as an apurinic/apyrimidinic (AP) endodeoxyribonuclease in the base excision repair (BER) pathway of DNA lesions induced by oxidative and alkylating agents. Initiates repair of AP sites in DNA by catalyzing hydrolytic incision of the phosphodiester backbone immediately adjacent to the damage, generating a single-strand break with 5'-deoxyribose phosphate and 3'-hydroxyl ends. Also incises at AP sites in the DNA strand of DNA/RNA hybrids, single-stranded DNA regions of R-loop structures, and single-stranded RNA molecules. Operates at switch sites of immunoglobulin (Ig) constant regions where it mediates Ig isotype class switch recombination. Processes AP sites induced by successive action of AICDA and UNG. Generates staggered nicks in opposite DNA strands resulting in the formation of double-strand DNA breaks that are finally resolved via non-homologous end joining repair pathway. Has 3'-5' exodeoxyribonuclease activity on mismatched deoxyribonucleotides at the 3' termini of nicked or gapped DNA molecules during short-patch BER. Possesses DNA 3' phosphodiesterase activity capable of removing lesions (such as phosphoglycolate and 8-oxoguanine) blocking the 3' side of DNA strand breaks. Also acts as an endoribonuclease involved in the control of single-stranded RNA metabolism. Plays a role in regulating MYC mRNA turnover by preferentially cleaving in between UA and CA dinucleotides of the MYC coding region determinant (CRD). In association with NMD1, plays a role in the rRNA quality control process during cell cycle progression. Acts as a loading factor for POLB onto non-incised AP sites in DNA and stimulates the 5'-terminal deoxyribose 5'-phosphate (dRp) excision activity of POLB. Exerts reversible nuclear redox activity to regulate DNA binding affinity and transcriptional activity of transcriptional factors by controlling the redox status of their DNA-binding domain, such as the FOS/JUN AP-1 complex after exposure to IR. Involved in calcium-dependent down-regulation of parathyroid hormone (PTH) expression by binding to negative calcium response elements (nCaREs). Together with HNRNPL or the dimer XRCC5/XRCC6, associates with nCaRE, acting as an activator of transcriptional repression. May also play a role in the epigenetic regulation of gene expression by participating in DNA demethylation. Stimulates the YBX1-mediated MDR1 promoter activity, when acetylated at Lys-6 and Lys-7, leading to drug resistance. Plays a role in protection from granzyme-mediated cellular repair leading to cell death. Binds DNA and RNA. Associates, together with YBX1, on the MDR1 promoter. Together with NPM1, associates with rRNA. The protein is DNA repair nuclease/redox regulator APEX1 (Apex1) of Rattus norvegicus (Rat).